Reading from the N-terminus, the 164-residue chain is Cell division protein SepF (164 aa).

The disordered stretch occupies residues 21–71 (YQQGQQPAQQQQSPVQAVPTPVPAPQQQAKRAPVTPLHKPSTTTRNAAPAE). The span at 22 to 49 (QQGQQPAQQQQSPVQAVPTPVPAPQQQA) shows a compositional bias: low complexity.

Belongs to the SepF family. In terms of assembly, homodimer. Interacts with FtsZ.

Its subcellular location is the cytoplasm. Functionally, cell division protein that is part of the divisome complex and is recruited early to the Z-ring. Probably stimulates Z-ring formation, perhaps through the cross-linking of FtsZ protofilaments. Its function overlaps with FtsA. This chain is Cell division protein SepF, found in Clavibacter sepedonicus (Clavibacter michiganensis subsp. sepedonicus).